We begin with the raw amino-acid sequence, 171 residues long: Adenine phosphoribosyltransferase (171 aa).

Belongs to the purine/pyrimidine phosphoribosyltransferase family. As to quaternary structure, homodimer.

It is found in the cytoplasm. It carries out the reaction AMP + diphosphate = 5-phospho-alpha-D-ribose 1-diphosphate + adenine. It participates in purine metabolism; AMP biosynthesis via salvage pathway; AMP from adenine: step 1/1. Functionally, catalyzes a salvage reaction resulting in the formation of AMP, that is energically less costly than de novo synthesis. This Synechococcus sp. (strain ATCC 27144 / PCC 6301 / SAUG 1402/1) (Anacystis nidulans) protein is Adenine phosphoribosyltransferase.